A 334-amino-acid polypeptide reads, in one-letter code: Chitin synthase export chaperone (334 aa).

7 consecutive transmembrane segments (helical) span residues 49–69 (IIFE…TVIM), 88–108 (FFYL…GVVP), 123–143 (GFSS…FQLY), 159–179 (LAAF…WAGL), 185–205 (VGLF…YVAM), 220–240 (LGDI…LYAF), and 250–270 (HYLD…MMVY).

This sequence belongs to the CHS7 family. In terms of assembly, interacts with CHS3.

Its subcellular location is the endoplasmic reticulum membrane. In terms of biological role, chaperone required for the export of the chitin synthase CHS3 from the endoplasmic reticulum. This is Chitin synthase export chaperone (CHS7) from Gibberella zeae (strain ATCC MYA-4620 / CBS 123657 / FGSC 9075 / NRRL 31084 / PH-1) (Wheat head blight fungus).